The following is a 1194-amino-acid chain: UPF0507 protein PICST_55861 (1194 aa).

Residues 324–475 (QSYDPEAVKF…LSSSLSDELS (152 aa)) enclose the VPS9 domain.

This sequence belongs to the UPF0507 family.

In Scheffersomyces stipitis (strain ATCC 58785 / CBS 6054 / NBRC 10063 / NRRL Y-11545) (Yeast), this protein is UPF0507 protein PICST_55861.